Reading from the N-terminus, the 509-residue chain is Steroid 17-alpha-hydroxylase/17,20 lyase (509 aa).

A substrate-binding site is contributed by asparagine 202. Heme is bound at residue cysteine 442.

The protein belongs to the cytochrome P450 family. Heme serves as cofactor.

It localises to the endoplasmic reticulum membrane. The protein resides in the microsome membrane. It carries out the reaction a C21-steroid + reduced [NADPH--hemoprotein reductase] + O2 = a 17alpha-hydroxy-C21-steroid + oxidized [NADPH--hemoprotein reductase] + H2O + H(+). It catalyses the reaction progesterone + reduced [NADPH--hemoprotein reductase] + O2 = 17alpha-hydroxyprogesterone + oxidized [NADPH--hemoprotein reductase] + H2O + H(+). The enzyme catalyses pregnenolone + reduced [NADPH--hemoprotein reductase] + O2 = 17alpha-hydroxypregnenolone + oxidized [NADPH--hemoprotein reductase] + H2O + H(+). The catalysed reaction is 17alpha-hydroxyprogesterone + reduced [NADPH--hemoprotein reductase] + O2 = androst-4-ene-3,17-dione + acetate + oxidized [NADPH--hemoprotein reductase] + H2O + 2 H(+). It carries out the reaction 17alpha-hydroxyprogesterone + reduced [NADPH--hemoprotein reductase] + O2 = 16alpha,17alpha-dihydroxyprogesterone + oxidized [NADPH--hemoprotein reductase] + H2O + H(+). It catalyses the reaction 16alpha,17alpha-dihydroxyprogesterone + reduced [NADPH--hemoprotein reductase] + O2 = 6beta,16alpha,17alpha-trihydroxyprogesterone + oxidized [NADPH--hemoprotein reductase] + H2O + H(+). The enzyme catalyses 17alpha-hydroxypregnenolone + reduced [NADPH--hemoprotein reductase] + O2 = 3beta-hydroxyandrost-5-en-17-one + acetate + oxidized [NADPH--hemoprotein reductase] + H2O + 2 H(+). The catalysed reaction is 16alpha,17alpha-dihydroxypregnenolone + reduced [NADPH--hemoprotein reductase] + O2 = 3beta,16alpha-dihydroxy-androst-5-en-17-one + acetate + oxidized [NADPH--hemoprotein reductase] + H2O + 2 H(+). It carries out the reaction 3beta-hydroxyandrost-5-en-17-one + reduced [NADPH--hemoprotein reductase] + O2 = 3beta,16alpha-dihydroxy-androst-5-en-17-one + oxidized [NADPH--hemoprotein reductase] + H2O + H(+). It catalyses the reaction androst-4-ene-3,17-dione + reduced [NADPH--hemoprotein reductase] + O2 = 16alpha-hydroxyandrost-4-ene-3,17-dione + oxidized [NADPH--hemoprotein reductase] + H2O + H(+). It participates in steroid hormone biosynthesis. It functions in the pathway steroid biosynthesis; glucocorticoid biosynthesis. With respect to regulation, regulated predominantly by intracellular cAMP levels. The 17,20-lyase activity is stimulated by cytochrome b5, which acts as an allosteric effector increasing the Vmax of the lyase activity. Functionally, a cytochrome P450 monooxygenase involved in corticoid and androgen biosynthesis. Catalyzes 17-alpha hydroxylation of C21 steroids, which is common for both pathways. A second oxidative step, required only for androgen synthesis, involves an acyl-carbon cleavage. The 17-alpha hydroxy intermediates, as part of adrenal glucocorticoids biosynthesis pathway, are precursors of cortisol. Hydroxylates steroid hormones, pregnenolone and progesterone to form 17-alpha hydroxy metabolites, followed by the cleavage of the C17-C20 bond to form C19 steroids, dehydroepiandrosterone (DHEA) and androstenedione. Has 16-alpha hydroxylase activity. Catalyzes 16-alpha hydroxylation of 17-alpha hydroxy pregnenolone, followed by the cleavage of the C17-C20 bond to form 16-alpha-hydroxy DHEA. Also 16-alpha hydroxylates androgens, relevant for estriol synthesis. Mechanistically, uses molecular oxygen inserting one oxygen atom into a substrate, and reducing the second into a water molecule, with two electrons provided by NADPH via cytochrome P450 reductase (CPR; NADPH-ferrihemoprotein reductase). In Ovis aries (Sheep), this protein is Steroid 17-alpha-hydroxylase/17,20 lyase (CYP17A1).